The following is a 238-amino-acid chain: Probable transcriptional regulatory protein SpyM51586 (238 aa).

This sequence belongs to the TACO1 family. YeeN subfamily.

Its subcellular location is the cytoplasm. The chain is Probable transcriptional regulatory protein SpyM51586 from Streptococcus pyogenes serotype M5 (strain Manfredo).